We begin with the raw amino-acid sequence, 430 residues long: Adenylosuccinate synthetase (430 aa).

Residues 12–18 and 40–42 contribute to the GTP site; these read GDEGKGK and GHT. Catalysis depends on aspartate 13, which acts as the Proton acceptor. Aspartate 13 and glycine 40 together coordinate Mg(2+). IMP is bound by residues 13-16, 38-41, threonine 128, arginine 142, glutamine 223, threonine 238, and arginine 302; these read DEGK and NAGH. The active-site Proton donor is histidine 41. 298-304 lines the substrate pocket; it reads TTTGRPR. GTP-binding positions include arginine 304, 330–332, and 412–414; these read SID and SVG.

Belongs to the adenylosuccinate synthetase family. As to quaternary structure, homodimer. It depends on Mg(2+) as a cofactor.

The protein resides in the cytoplasm. The enzyme catalyses IMP + L-aspartate + GTP = N(6)-(1,2-dicarboxyethyl)-AMP + GDP + phosphate + 2 H(+). Its pathway is purine metabolism; AMP biosynthesis via de novo pathway; AMP from IMP: step 1/2. Functionally, plays an important role in the de novo pathway of purine nucleotide biosynthesis. Catalyzes the first committed step in the biosynthesis of AMP from IMP. The chain is Adenylosuccinate synthetase from Streptococcus agalactiae serotype Ia (strain ATCC 27591 / A909 / CDC SS700).